A 173-amino-acid polypeptide reads, in one-letter code: Photosystem I assembly protein Ycf3 (173 aa).

3 TPR repeats span residues 35 to 68, 72 to 105, and 120 to 153; these read AFSY…EEDP, SYIL…NFKL, and GVQA…APDN.

It belongs to the Ycf3 family.

The protein resides in the plastid. The protein localises to the chloroplast thylakoid membrane. In terms of biological role, essential for the assembly of the photosystem I (PSI) complex. May act as a chaperone-like factor to guide the assembly of the PSI subunits. This is Photosystem I assembly protein Ycf3 from Porphyra purpurea (Red seaweed).